The chain runs to 192 residues: Protein GrpE (192 aa).

The segment at 1-43 (MQENKQPSEIQGELPQPPDGESVPPQPTNEQAPPDTDTMPRIE) is disordered.

Belongs to the GrpE family. As to quaternary structure, homodimer.

Its subcellular location is the cytoplasm. Participates actively in the response to hyperosmotic and heat shock by preventing the aggregation of stress-denatured proteins, in association with DnaK and GrpE. It is the nucleotide exchange factor for DnaK and may function as a thermosensor. Unfolded proteins bind initially to DnaJ; upon interaction with the DnaJ-bound protein, DnaK hydrolyzes its bound ATP, resulting in the formation of a stable complex. GrpE releases ADP from DnaK; ATP binding to DnaK triggers the release of the substrate protein, thus completing the reaction cycle. Several rounds of ATP-dependent interactions between DnaJ, DnaK and GrpE are required for fully efficient folding. The chain is Protein GrpE from Aromatoleum aromaticum (strain DSM 19018 / LMG 30748 / EbN1) (Azoarcus sp. (strain EbN1)).